A 160-amino-acid chain; its full sequence is Seed allergenic protein RA5 (160 aa).

The signal sequence occupies residues Met1 to Ala26. 5 disulfides stabilise this stretch: Cys42-Cys92, Cys56-Cys80, Cys64-Cys124, Cys81-Cys140, and Cys94-Cys152.

It belongs to the protease inhibitor I6 (cereal trypsin/alpha-amylase inhibitor) family. Post-translationally, five disulfide bonds are present.

Its subcellular location is the secreted. In terms of biological role, seed storage protein. This is Seed allergenic protein RA5 (RA5) from Oryza sativa subsp. japonica (Rice).